Reading from the N-terminus, the 148-residue chain is Putative anti-anti-sigma factor Rv2638 (148 aa).

Residues 30–141 (LRATTDGSGA…PTVDTALGKG (112 aa)) enclose the STAS domain.

It belongs to the anti-sigma-factor antagonist family. As to quaternary structure, interacts with unphosphorylated OprA.

This Mycobacterium tuberculosis (strain ATCC 25618 / H37Rv) protein is Putative anti-anti-sigma factor Rv2638.